The following is a 146-amino-acid chain: Bacterial hemoglobin (146 aa).

The Globin domain occupies 1 to 138 (MLDQQTINII…IADVFIQVEA (138 aa)). Residues Gln53 and His85 each coordinate heme b.

The protein belongs to the globin family. In terms of assembly, homodimer.

Its function is as follows. This protein functions as a terminal oxidase. This Vitreoscilla stercoraria protein is Bacterial hemoglobin (vhb).